A 141-amino-acid polypeptide reads, in one-letter code: Organic hydroperoxide resistance protein-like 1 (141 aa).

A disordered region spans residues 1–20 (MAVNYETKATNTGGRNGHVQ).

This sequence belongs to the OsmC/Ohr family.

This is Organic hydroperoxide resistance protein-like 1 from Staphylococcus saprophyticus subsp. saprophyticus (strain ATCC 15305 / DSM 20229 / NCIMB 8711 / NCTC 7292 / S-41).